Reading from the N-terminus, the 142-residue chain is Midkine (142 aa).

Positions 1 to 21 (MQPRGLLLLLALLLLAAAAEA) are cleaved as a signal peptide. Disulfide bonds link cysteine 36–cysteine 60, cysteine 44–cysteine 69, cysteine 51–cysteine 73, cysteine 83–cysteine 115, and cysteine 93–cysteine 125.

The protein belongs to the pleiotrophin family.

Its subcellular location is the cell surface. It is found in the secreted. It localises to the extracellular space. The protein resides in the extracellular matrix. The protein localises to the basement membrane. In terms of biological role, has mitogenic activity, and neurite extension activity for PC12 cells. The chain is Midkine (RIHB) from Gallus gallus (Chicken).